A 268-amino-acid chain; its full sequence is MFSDAIRAVILGIVEGVTEFLPVSSTGHLLLAERFFDLGSGNFWNTFTVLIQLGAILAIVVIYFEKLWRIALGMFSNDADRRFVIGVLAAFLPAVVVGLIAGKYIKELLFNPWVVCFSLIVGGAVLMWVDQLDHKPHEHDATAFPLPMYIWIGIAQCLAMIPGVSRSGATIVSAMLLGADKRAAAEFSFFLAIPTMIGAFAYDFYKNRADMTTDHLGIVAIGFVVSFVTAIVVVKAFLSYVTRNGFTFFAWWRVIVGTLGLIALALGR.

Helical transmembrane passes span 43 to 63, 83 to 103, 109 to 129, 144 to 164, 184 to 204, 218 to 238, and 246 to 266; these read FWNT…VVIY, FVIG…IAGK, LFNP…LMWV, FPLP…IPGV, AAEF…AYDF, IVAI…KAFL, and FTFF…ALAL.

It belongs to the UppP family.

It is found in the cell inner membrane. The enzyme catalyses di-trans,octa-cis-undecaprenyl diphosphate + H2O = di-trans,octa-cis-undecaprenyl phosphate + phosphate + H(+). In terms of biological role, catalyzes the dephosphorylation of undecaprenyl diphosphate (UPP). Confers resistance to bacitracin. This Nitrobacter hamburgensis (strain DSM 10229 / NCIMB 13809 / X14) protein is Undecaprenyl-diphosphatase.